Here is an 874-residue protein sequence, read N- to C-terminus: Coatomer subunit gamma-1 (874 aa).

Residues 1-11 (MLKKFDKKDEE) are compositionally biased toward basic and acidic residues. A disordered region spans residues 1–21 (MLKKFDKKDEESGGGSNPLQH). HEAT repeat units lie at residues 64-101 (TEAT…IAED), 283-320 (KELA…KHPS), 322-355 (VTAC…GSES), and 356-392 (SIDR…KYPR). Threonine 594 bears the Phosphothreonine mark. The segment at 609-874 (RQEIFQEQLA…PVDIILASVG (266 aa)) is interaction with ZNF289/ARFGAP2.

Belongs to the COPG family. As to quaternary structure, oligomeric complex that consists of at least the alpha, beta, beta', gamma, delta, epsilon and zeta subunits. Interacts with ZNF289/ARFGAP2 through its C-terminal appendage domain. Interacts with EGFR upon EGF treatment; interaction is essential for regulation of EGF-dependent nuclear transport of EGFR by retrograde trafficking from the Golgi to the ER. The coatomer interacts with KDEL receptors; the interaction is important for retrograde trafficking of KDEL-bearing proteins from the Golgi to the endoplasmic reticulum. Interacts with COPB1. Interacts with TMED10 (via C-terminus). Interacts with TMED2, TMED3, TMED7 and TMED9.

The protein resides in the cytoplasm. Its subcellular location is the cytosol. It localises to the golgi apparatus membrane. The protein localises to the cytoplasmic vesicle. It is found in the COPI-coated vesicle membrane. The coatomer is a cytosolic protein complex that binds to dilysine motifs and reversibly associates with Golgi non-clathrin-coated vesicles, which further mediate biosynthetic protein transport from the ER, via the Golgi up to the trans Golgi network. Coatomer complex is required for budding from Golgi membranes, and is essential for the retrograde Golgi-to-ER transport of dilysine-tagged proteins. In mammals, the coatomer can only be recruited by membranes associated to ADP-ribosylation factors (ARFs), which are small GTP-binding proteins; the complex also influences the Golgi structural integrity, as well as the processing, activity, and endocytic recycling of LDL receptors. Required for limiting lipid storage in lipid droplets. Involved in lipid homeostasis by regulating the presence of perilipin family members PLIN2 and PLIN3 at the lipid droplet surface and promoting the association of adipocyte triglyceride lipase (PNPLA2) with the lipid droplet surface to mediate lipolysis. The chain is Coatomer subunit gamma-1 (Copg1) from Rattus norvegicus (Rat).